The sequence spans 378 residues: Chaperone protein DnaJ 2 (378 aa).

The region spanning 4 to 68 (DYYAVLGVRR…QKKQVYDLGG (65 aa)) is the J domain. The segment at 130–212 (GTTKDIQVET…CAGDGRVRSR (83 aa)) adopts a CR-type zinc-finger fold. Residues C143, C146, C160, C163, C186, C189, C200, and C203 each contribute to the Zn(2+) site. CXXCXGXG motif repeat units lie at residues 143-150 (CTTCSGEG), 160-167 (CDMCRGRG), 186-193 (CPQCQGFG), and 200-207 (CPECAGDG). The segment at 351 to 378 (RGEERPTGQFQPGQQGLFSRLKDAFNGR) is disordered. The span at 358-367 (GQFQPGQQGL) shows a compositional bias: polar residues.

It belongs to the DnaJ family. In terms of assembly, homodimer. It depends on Zn(2+) as a cofactor.

The protein resides in the cytoplasm. Its function is as follows. Participates actively in the response to hyperosmotic and heat shock by preventing the aggregation of stress-denatured proteins and by disaggregating proteins, also in an autonomous, DnaK-independent fashion. Unfolded proteins bind initially to DnaJ; upon interaction with the DnaJ-bound protein, DnaK hydrolyzes its bound ATP, resulting in the formation of a stable complex. GrpE releases ADP from DnaK; ATP binding to DnaK triggers the release of the substrate protein, thus completing the reaction cycle. Several rounds of ATP-dependent interactions between DnaJ, DnaK and GrpE are required for fully efficient folding. Also involved, together with DnaK and GrpE, in the DNA replication of plasmids through activation of initiation proteins. This chain is Chaperone protein DnaJ 2, found in Streptomyces avermitilis (strain ATCC 31267 / DSM 46492 / JCM 5070 / NBRC 14893 / NCIMB 12804 / NRRL 8165 / MA-4680).